Here is a 1162-residue protein sequence, read N- to C-terminus: Isoleucine--tRNA ligase (1162 aa).

The short motif at 50–60 (PSANGMPGIHH) is the 'HIGH' region element. Positions 710 to 714 (KMSKR) match the 'KMSKS' region motif. Lys-713 is an ATP binding site.

It belongs to the class-I aminoacyl-tRNA synthetase family. IleS type 2 subfamily. As to quaternary structure, monomer. The cofactor is Zn(2+).

The protein localises to the cytoplasm. It carries out the reaction tRNA(Ile) + L-isoleucine + ATP = L-isoleucyl-tRNA(Ile) + AMP + diphosphate. Functionally, catalyzes the attachment of isoleucine to tRNA(Ile). As IleRS can inadvertently accommodate and process structurally similar amino acids such as valine, to avoid such errors it has two additional distinct tRNA(Ile)-dependent editing activities. One activity is designated as 'pretransfer' editing and involves the hydrolysis of activated Val-AMP. The other activity is designated 'posttransfer' editing and involves deacylation of mischarged Val-tRNA(Ile). The polypeptide is Isoleucine--tRNA ligase (Bacteroides thetaiotaomicron (strain ATCC 29148 / DSM 2079 / JCM 5827 / CCUG 10774 / NCTC 10582 / VPI-5482 / E50)).